Reading from the N-terminus, the 393-residue chain is NAD(P)H-quinone oxidoreductase subunit H, chloroplastic (393 aa).

Belongs to the complex I 49 kDa subunit family. In terms of assembly, NDH is composed of at least 16 different subunits, 5 of which are encoded in the nucleus.

It localises to the plastid. The protein localises to the chloroplast thylakoid membrane. The enzyme catalyses a plastoquinone + NADH + (n+1) H(+)(in) = a plastoquinol + NAD(+) + n H(+)(out). It catalyses the reaction a plastoquinone + NADPH + (n+1) H(+)(in) = a plastoquinol + NADP(+) + n H(+)(out). Functionally, NDH shuttles electrons from NAD(P)H:plastoquinone, via FMN and iron-sulfur (Fe-S) centers, to quinones in the photosynthetic chain and possibly in a chloroplast respiratory chain. The immediate electron acceptor for the enzyme in this species is believed to be plastoquinone. Couples the redox reaction to proton translocation, and thus conserves the redox energy in a proton gradient. The chain is NAD(P)H-quinone oxidoreductase subunit H, chloroplastic from Huperzia lucidula (Shining clubmoss).